The primary structure comprises 362 residues: Outer envelope protein 39, chloroplastic (362 aa).

This sequence belongs to the OEP80 (TC 1.B.33.2) family. In terms of tissue distribution, expressed in germinating seeds. Expressed in the vasculature of roots, cotyledons and leaves.

The protein resides in the plastid. It localises to the chloroplast outer membrane. Beta-barrel pore-forming protein which possesses voltage-dependent channel activity. Required for proper plastid development. Involved in the maintenance of metabolic homeostasis of full-grown plants. In Arabidopsis thaliana (Mouse-ear cress), this protein is Outer envelope protein 39, chloroplastic.